The sequence spans 71 residues: DNA-directed RNA polymerase subunit omega (71 aa).

It belongs to the RNA polymerase subunit omega family. The RNAP catalytic core consists of 2 alpha, 1 beta, 1 beta' and 1 omega subunit. When a sigma factor is associated with the core the holoenzyme is formed, which can initiate transcription.

The catalysed reaction is RNA(n) + a ribonucleoside 5'-triphosphate = RNA(n+1) + diphosphate. Functionally, promotes RNA polymerase assembly. Latches the N- and C-terminal regions of the beta' subunit thereby facilitating its interaction with the beta and alpha subunits. This Campylobacter curvus (strain 525.92) protein is DNA-directed RNA polymerase subunit omega.